Reading from the N-terminus, the 182-residue chain is Biotin carboxyl carrier protein of acetyl-CoA carboxylase (182 aa).

Residues 70–95 form a disordered region; it reads AAPSPSPEPGTSRAADHAVTSSGSQP. Residues 104 to 180 enclose the Biotinyl-binding domain; sequence LAEVASPMVG…EYNQPLMRIK (77 aa). K146 carries the post-translational modification N6-biotinyllysine.

As to quaternary structure, homodimer.

The protein operates within lipid metabolism; fatty acid biosynthesis. Its function is as follows. This protein is a component of the acetyl coenzyme A carboxylase complex; first, biotin carboxylase catalyzes the carboxylation of the carrier protein and then the transcarboxylase transfers the carboxyl group to form malonyl-CoA. The chain is Biotin carboxyl carrier protein of acetyl-CoA carboxylase (accB) from Nostoc sp. (strain PCC 7120 / SAG 25.82 / UTEX 2576).